Here is a 236-residue protein sequence, read N- to C-terminus: Biosynthetic peptidoglycan transglycosylase (236 aa).

A helical transmembrane segment spans residues 12-31 (ALLWFAASSIVLVLVFRWVP).

This sequence belongs to the glycosyltransferase 51 family.

The protein resides in the cell inner membrane. It catalyses the reaction [GlcNAc-(1-&gt;4)-Mur2Ac(oyl-L-Ala-gamma-D-Glu-L-Lys-D-Ala-D-Ala)](n)-di-trans,octa-cis-undecaprenyl diphosphate + beta-D-GlcNAc-(1-&gt;4)-Mur2Ac(oyl-L-Ala-gamma-D-Glu-L-Lys-D-Ala-D-Ala)-di-trans,octa-cis-undecaprenyl diphosphate = [GlcNAc-(1-&gt;4)-Mur2Ac(oyl-L-Ala-gamma-D-Glu-L-Lys-D-Ala-D-Ala)](n+1)-di-trans,octa-cis-undecaprenyl diphosphate + di-trans,octa-cis-undecaprenyl diphosphate + H(+). The protein operates within cell wall biogenesis; peptidoglycan biosynthesis. Peptidoglycan polymerase that catalyzes glycan chain elongation from lipid-linked precursors. The sequence is that of Biosynthetic peptidoglycan transglycosylase from Pseudomonas putida (strain GB-1).